We begin with the raw amino-acid sequence, 638 residues long: Growth hormone receptor (638 aa).

The first 18 residues, 1-18, serve as a signal peptide directing secretion; the sequence is MDLWRVFLTLALAVSSDM. At 19-265 the chain is on the extracellular side; sequence FPGSGATPAT…TLAACEEDFR (247 aa). 2 disulfides stabilise this stretch: Cys56/Cys66 and Cys101/Cys112. N-linked (GlcNAc...) asparagine glycosylation occurs at Asn115. An intrachain disulfide couples Cys126 to Cys140. In terms of domain architecture, Fibronectin type-III spans 151–254; that stretch reads PPIGLNWTLL…EVLRVTFPQM (104 aa). N-linked (GlcNAc...) asparagine glycosylation is found at Asn156, Asn161, and Asn200. Residues 240-244 carry the WSXWS motif motif; it reads YSEFS. A helical membrane pass occupies residues 266 to 289; sequence FPWFLIIIFGIFGVAVMLFVVIFS. Residues 290–638 lie on the Cytoplasmic side of the membrane; it reads KQQRIKMLIL…STDQLNKIMQ (349 aa). Positions 295-380 are required for JAK2 binding; that stretch reads KMLILPPVPV…QEKSAGILGA (86 aa). Positions 298–306 match the Box 1 motif motif; the sequence is ILPPVPVPK. The short motif at 341–350 is the UbE motif element; that stretch reads DSWVEFIELD. Ser342 carries the phosphoserine modification. The interval 357 to 389 is disordered; the sequence is KTEESDTDRLLSDDQEKSAGILGAKDDDSGRTS. Basic and acidic residues predominate over residues 363 to 373; the sequence is TDRLLSDDQEK. 2 positions are modified to phosphotyrosine: Tyr487 and Tyr594.

The protein belongs to the type I cytokine receptor family. Type 1 subfamily. In terms of assembly, on growth hormone (GH) binding, forms homodimers and binds JAK2 via a box 1-containing domain. Post-translationally, the soluble form (GHBP) is produced by phorbol ester-promoted proteolytic cleavage at the cell surface (shedding) by ADAM17/TACE. Shedding is inhibited by growth hormone (GH) binding to the receptor probably due to a conformational change in GHR rendering the receptor inaccessible to ADAM17. On GH binding, phosphorylated on tyrosine residues in the cytoplasmic domain by JAK2. Phosphorylation on either (or all of) Tyr-534, Tyr-566 and/or Tyr-627 is required for STAT5 activation. Phosphorylation on Tyr-333 would seem necessary for JAK2 activation. In terms of processing, ubiquitinated by the ECS(SOCS2) complex following ligand-binding and phosphorylation by JAK2, leading to its degradation by the proteasome. Regulation by the ECS(SOCS2) complex acts as a negative feedback loop of growth hormone receptor signaling. Ubiquitination is not sufficient for GHR internalization. Highest expression in liver. Also expressed in heart, kidney and muscle.

Its subcellular location is the cell membrane. The protein localises to the secreted. Receptor for pituitary gland growth hormone involved in regulating postnatal body growth. On ligand binding, couples to, and activates the JAK2/STAT5 pathway. Functionally, receptor for pituitary gland growth hormone (GH1) involved in regulating postnatal body growth. On ligand binding, couples to the JAK2/STAT5 pathway. In terms of biological role, the soluble form (GHBP) acts as a reservoir of growth hormone in plasma and may be a modulator/inhibitor of GH signaling. This Rattus norvegicus (Rat) protein is Growth hormone receptor (Ghr).